Consider the following 1260-residue polypeptide: MGQHQRTSSTHLPILYNHLLNCIFNNPHYNKSPFKNVVEELRTKHNQYTIIVPSAFVLNEFYDPATEGSSNRVLLKELCYNNEEFIKSHIIQTGSPVSSTITPISKEQLVIYKTMDNKQVLLKNRMIYTGKGFRRSLKLKILAVSYFRSFCDYFPKGSQFMLVHIESTLFGGQPYIKSSLPLAPILNVNDSSTASKSNSLTLESINNKIKNESVTFEKLLRNFPLLARAVGDKFNRLFHHNNHQFYGLRSNTRKKLEHIKIEFHKILDEAFKIILDSVKEERPNGEATYNLINHIISIHPNLNLDKLVHEYVELNLYDVLWSQLIYQYNYPNDDKADYDPSATKVMTSAKYEQLSCLSLNQLDVPLNKPWQLNELHHRIYQAVQELKKLSTSSTTTSTLAAKMQIIYNTINILTNPSQHAPMAPDLVIDADTLMALLIMTIVHAKVDNFEAHLFYIESFSASDVVCDGHFSYIMSTLDAVICHLSDNDKGLNTLIQSSQQNLELWSAIFELDLVSITKIVESFKNAALLPEQHCLKSRNISGEGALTFALKANNYDVYKLLLDGNPNWFTIDDILYEKNVVTNQNLLMCALLEETKEQIVLDLLETITENATVKEQQAYYNMQDLSGRSIGHYLFHNMSLISKIGHLIDWELRDRNTHTPLFSLCRCYDHPEYIELVQAGFEAVYLQLDKMRNNHNQNICSNGTKIETDACKDARDGIHINNDNSSRGIDFEKHIDKNGNTLLHVILKGIPETRILSRELNLIDVNISNYRHLTPLMLYVKYGRLENLESILADNRLDFLAEDPSTHYNIFDYLSFLAGRYAKENVEKIEKKLIEFYFSHYFPFEAHYKLVALNGKYDPSTRDWYIYYRAEDQKALRPKSLNSLKHILYLEKLQRPFTTFIDSDIFWRNYATNISTTPMFHKLRVNSLIHRLNILFQSVACQNIGDSRANDLFNRFLTNDEDELVLELKKKITDLLELKKLKLGEVKLKVGQVQEIEYFLDYCLDEMRRAIQIFSKLSKVAIIGEQKQIDVQNVENSLLYRFDVERFFQPFKTLTENETLVRVSGSLGNFGDYLVWIELAGKELLKNIFKISADIQTWKDLYHAIYTINRDLRSMEYPTGSLPTASSNAKETDPKALLREGGNTLSRTPTNSSDYTACNFDVPNTVVDDNEGIFNLLASSKRSKYKKLVVARADLVKQIMKLNVDIKWLHEIIATELSQFIKFRGRFLEFSTKLFVNEEMRSLRKRKLELEKFLYKVKNS.

The VPS9 domain maps to 336–493; sequence ADYDPSATKV…LSDNDKGLNT (158 aa).

Belongs to the UPF0507 family.

The chain is UPF0507 protein LELG_01076 from Lodderomyces elongisporus (strain ATCC 11503 / CBS 2605 / JCM 1781 / NBRC 1676 / NRRL YB-4239) (Yeast).